The primary structure comprises 481 residues: Arylsulfatase (481 aa).

The Ca(2+) site is built by D11, Q12, and C51. The active-site Nucleophile is the C51. C51 carries the 3-oxoalanine (Cys) modification. Residue H102 is part of the active site. Residues D302 and H303 each coordinate Ca(2+).

Belongs to the sulfatase family. Requires Ca(2+) as cofactor. Post-translationally, the conversion to 3-oxoalanine (also known as C-formylglycine, FGly), of a serine or cysteine residue in prokaryotes and of a cysteine residue in eukaryotes, is critical for catalytic activity.

It catalyses the reaction an aryl sulfate + H2O = a phenol + sulfate + H(+). Its function is as follows. Has sulfatase activity toward para-nitrophenyl sulfate, which is increased in presence of calcium ion. The chain is Arylsulfatase from Clostridium perfringens (strain 13 / Type A).